A 528-amino-acid polypeptide reads, in one-letter code: Alpha-amylase (528 aa).

An N-terminal signal peptide occupies residues 1–28 (MNKKWLNIPALIALLAAIAFGSVAPAEA). 2 residues coordinate Ca(2+): Asn-168 and Asp-228. Asp-258 acts as the Nucleophile in catalysis. His-262 is a binding site for Ca(2+). Glu-286 functions as the Proton donor in the catalytic mechanism.

Belongs to the glycosyl hydrolase 13 family. As to quaternary structure, monomer. It depends on Ca(2+) as a cofactor.

The catalysed reaction is Endohydrolysis of (1-&gt;4)-alpha-D-glucosidic linkages in polysaccharides containing three or more (1-&gt;4)-alpha-linked D-glucose units.. This is Alpha-amylase from Niallia circulans (Bacillus circulans).